The chain runs to 930 residues: Protocadherin gamma-B6 (930 aa).

Positions 1-30 are cleaved as a signal peptide; sequence MGGSCAQRRRAGPRQVLFPLLLPFFYPTLC. Cadherin domains are found at residues 31–133, 134–242, 243–347, 348–452, 453–562, and 570–675; these read EPIR…APQF, DKKE…PPVF, SRDE…SPEI, IITS…APVF, DQTS…APRV, and DGSA…LPDL. The Extracellular segment spans residues 31-691; sequence EPIRYSIPEE…SDPQAELQFY (661 aa). 3 N-linked (GlcNAc...) asparagine glycosylation sites follow: asparagine 304, asparagine 419, and asparagine 545. The chain crosses the membrane as a helical span at residues 692 to 712; it reads LVVALALISVLFLLAVILAIA. Residues 713-930 are Cytoplasmic-facing; sequence LRLRRSLSPT…KKKSGKKEKK (218 aa). Disordered stretches follow at residues 791–839 and 900–930; these read PHGG…WPNN and ATLT…KEKK. The segment covering 800-839 has biased composition (polar residues); that stretch reads HPETLTSQAPPNTDWRFSQAQRPGTSGSQNGDDTGTWPNN. Positions 920-930 are enriched in basic residues; sequence NKKKSGKKEKK.

The protein resides in the cell membrane. Its function is as follows. Potential calcium-dependent cell-adhesion protein. May be involved in the establishment and maintenance of specific neuronal connections in the brain. In Pan troglodytes (Chimpanzee), this protein is Protocadherin gamma-B6 (PCDHGB6).